The primary structure comprises 320 residues: Methionyl-tRNA formyltransferase (320 aa).

112–115 is a binding site for (6S)-5,6,7,8-tetrahydrofolate; the sequence is SLLP.

It belongs to the Fmt family.

The enzyme catalyses L-methionyl-tRNA(fMet) + (6R)-10-formyltetrahydrofolate = N-formyl-L-methionyl-tRNA(fMet) + (6S)-5,6,7,8-tetrahydrofolate + H(+). Attaches a formyl group to the free amino group of methionyl-tRNA(fMet). The formyl group appears to play a dual role in the initiator identity of N-formylmethionyl-tRNA by promoting its recognition by IF2 and preventing the misappropriation of this tRNA by the elongation apparatus. The polypeptide is Methionyl-tRNA formyltransferase (Allorhizobium ampelinum (strain ATCC BAA-846 / DSM 112012 / S4) (Agrobacterium vitis (strain S4))).